Here is a 113-residue protein sequence, read N- to C-terminus: Iron-sulfur cluster insertion protein ErpA (113 aa).

Positions 41, 105, and 107 each coordinate iron-sulfur cluster.

The protein belongs to the HesB/IscA family. In terms of assembly, homodimer. It depends on iron-sulfur cluster as a cofactor.

Its function is as follows. Required for insertion of 4Fe-4S clusters for at least IspG. The protein is Iron-sulfur cluster insertion protein ErpA of Actinobacillus pleuropneumoniae serotype 7 (strain AP76).